The primary structure comprises 300 residues: Protoheme IX farnesyltransferase (300 aa).

The next 9 helical transmembrane spans lie at 28–48 (VVAL…PTIL), 50–70 (VQPL…AAAL), 100–120 (ALIF…VFTN), 122–142 (LTAW…TAYL), 149–169 (NIVI…TAVT), 176–196 (ALLL…ALAI), 222–242 (CILL…LVGM), 243–263 (SGPL…YKAW), and 280–300 (FSIY…YLWA).

It belongs to the UbiA prenyltransferase family. Protoheme IX farnesyltransferase subfamily.

It is found in the cell inner membrane. It catalyses the reaction heme b + (2E,6E)-farnesyl diphosphate + H2O = Fe(II)-heme o + diphosphate. The protein operates within porphyrin-containing compound metabolism; heme O biosynthesis; heme O from protoheme: step 1/1. In terms of biological role, converts heme B (protoheme IX) to heme O by substitution of the vinyl group on carbon 2 of heme B porphyrin ring with a hydroxyethyl farnesyl side group. The polypeptide is Protoheme IX farnesyltransferase (Shewanella oneidensis (strain ATCC 700550 / JCM 31522 / CIP 106686 / LMG 19005 / NCIMB 14063 / MR-1)).